The sequence spans 457 residues: Siroheme synthase (457 aa).

The precorrin-2 dehydrogenase /sirohydrochlorin ferrochelatase stretch occupies residues 1–204 (MDHLPIFCQL…ADEKAVNATT (204 aa)). NAD(+) contacts are provided by residues 22-23 (DV) and 43-44 (LN). Residue Ser128 is modified to Phosphoserine. Positions 216–457 (GEVVLVGAGP…RDKLNWFSNH (242 aa)) are uroporphyrinogen-III C-methyltransferase. Pro225 is a binding site for S-adenosyl-L-methionine. Asp248 (proton acceptor) is an active-site residue. Lys270 serves as the catalytic Proton donor. Residues 301–303 (GGD), Ile306, 331–332 (TA), Met382, and Gly411 contribute to the S-adenosyl-L-methionine site.

This sequence in the N-terminal section; belongs to the precorrin-2 dehydrogenase / sirohydrochlorin ferrochelatase family. The protein in the C-terminal section; belongs to the precorrin methyltransferase family.

It carries out the reaction uroporphyrinogen III + 2 S-adenosyl-L-methionine = precorrin-2 + 2 S-adenosyl-L-homocysteine + H(+). The catalysed reaction is precorrin-2 + NAD(+) = sirohydrochlorin + NADH + 2 H(+). The enzyme catalyses siroheme + 2 H(+) = sirohydrochlorin + Fe(2+). Its pathway is cofactor biosynthesis; adenosylcobalamin biosynthesis; precorrin-2 from uroporphyrinogen III: step 1/1. It functions in the pathway cofactor biosynthesis; adenosylcobalamin biosynthesis; sirohydrochlorin from precorrin-2: step 1/1. The protein operates within porphyrin-containing compound metabolism; siroheme biosynthesis; precorrin-2 from uroporphyrinogen III: step 1/1. It participates in porphyrin-containing compound metabolism; siroheme biosynthesis; siroheme from sirohydrochlorin: step 1/1. Its pathway is porphyrin-containing compound metabolism; siroheme biosynthesis; sirohydrochlorin from precorrin-2: step 1/1. Its function is as follows. Multifunctional enzyme that catalyzes the SAM-dependent methylations of uroporphyrinogen III at position C-2 and C-7 to form precorrin-2 via precorrin-1. Then it catalyzes the NAD-dependent ring dehydrogenation of precorrin-2 to yield sirohydrochlorin. Finally, it catalyzes the ferrochelation of sirohydrochlorin to yield siroheme. In Salmonella paratyphi A (strain ATCC 9150 / SARB42), this protein is Siroheme synthase.